The primary structure comprises 293 residues: Sodium-type flagellar protein MotY (293 aa).

A signal peptide spans 1 to 21 (MNKWLITSGVMLSLLSANSYA). The OmpA-like domain occupies 175–292 (YSFEDIAFTI…RVVISLGRTQ (118 aa)).

It localises to the cell membrane. Functionally, may play the role of a stator in the sodium flagellar motor, stabilizing the force-generating unit through direct interaction with the cell wall. The sequence is that of Sodium-type flagellar protein MotY from Vibrio parahaemolyticus serotype O3:K6 (strain RIMD 2210633).